A 184-amino-acid polypeptide reads, in one-letter code: Cell wall protein phiA (184 aa).

Positions 1–21 are cleaved as a signal peptide; sequence MQLKNLIFAAATAAALPATDA. N-linked (GlcNAc...) asparagine glycosylation occurs at asparagine 58.

This sequence belongs to the phiA family.

Its subcellular location is the secreted. The protein localises to the cell wall. In terms of biological role, cell wall protein involved in development of asexual structures such as phialide and conidium development, and thus required for spore formation. Plays a role as a general stress protectant produced by the fungus in competition with antagonistic bacteria. This Aspergillus niger (strain ATCC MYA-4892 / CBS 513.88 / FGSC A1513) protein is Cell wall protein phiA.